Reading from the N-terminus, the 559-residue chain is Inositol-3-phosphate synthase 1 (559 aa).

NAD(+)-binding residues include Gly67, Gly68, Asn69, Asn70, Asp141, Ser177, Val178, Gln188, Arg191, Thr228, Ala229, Asn230, Thr231, Gly278, Ser279, Asp303, Ser306, Asn337, Asn338, Asp339, and Lys352. Ser279 carries the post-translational modification Phosphoserine. A Phosphoserine modification is found at Ser357. Positions 390, 391, 419, and 420 each coordinate NAD(+).

Belongs to the myo-inositol 1-phosphate synthase family. NAD(+) serves as cofactor.

It is found in the cytoplasm. The enzyme catalyses D-glucose 6-phosphate = 1D-myo-inositol 3-phosphate. It participates in polyol metabolism; myo-inositol biosynthesis; myo-inositol from D-glucose 6-phosphate: step 1/2. Functionally, key enzyme in myo-inositol biosynthesis pathway that catalyzes the conversion of glucose 6-phosphate to 1-myo-inositol 1-phosphate in a NAD-dependent manner. Rate-limiting enzyme in the synthesis of all inositol-containing compounds. The polypeptide is Inositol-3-phosphate synthase 1 (ISYNA1) (Macaca fascicularis (Crab-eating macaque)).